The following is a 169-amino-acid chain: Cell division inhibitor SulA (169 aa).

Over residues 1–15 (MFTSAHANRSAQASA) the composition is skewed to polar residues. The tract at residues 1 to 22 (MFTSAHANRSAQASASAGHYAH) is disordered. The interval 106 to 112 (ALRTGNY) is ftsZ binding. A lon protease binding region spans residues 162–169 (KIHSNLYH).

It belongs to the SulA family. In terms of assembly, interacts with FtsZ. In terms of processing, is rapidly cleaved and degraded by the Lon protease once DNA damage is repaired.

In terms of biological role, component of the SOS system and an inhibitor of cell division. Accumulation of SulA causes rapid cessation of cell division and the appearance of long, non-septate filaments. In the presence of GTP, binds a polymerization-competent form of FtsZ in a 1:1 ratio, thus inhibiting FtsZ polymerization and therefore preventing it from participating in the assembly of the Z ring. This mechanism prevents the premature segregation of damaged DNA to daughter cells during cell division. This is Cell division inhibitor SulA from Klebsiella pneumoniae (strain 342).